A 198-amino-acid chain; its full sequence is Peptidyl-tRNA hydrolase (198 aa).

Tyr-15 contacts tRNA. His-20 serves as the catalytic Proton acceptor. 3 residues coordinate tRNA: Phe-66, Asn-68, and Asn-114.

Belongs to the PTH family. Monomer.

The protein resides in the cytoplasm. It carries out the reaction an N-acyl-L-alpha-aminoacyl-tRNA + H2O = an N-acyl-L-amino acid + a tRNA + H(+). Hydrolyzes ribosome-free peptidyl-tRNAs (with 1 or more amino acids incorporated), which drop off the ribosome during protein synthesis, or as a result of ribosome stalling. Functionally, catalyzes the release of premature peptidyl moieties from peptidyl-tRNA molecules trapped in stalled 50S ribosomal subunits, and thus maintains levels of free tRNAs and 50S ribosomes. This Cupriavidus necator (strain ATCC 17699 / DSM 428 / KCTC 22496 / NCIMB 10442 / H16 / Stanier 337) (Ralstonia eutropha) protein is Peptidyl-tRNA hydrolase.